The sequence spans 606 residues: 1-deoxy-D-xylulose-5-phosphate synthase (606 aa).

Residues His-63 and 104 to 106 (GHS) each bind thiamine diphosphate. Asp-137 lines the Mg(2+) pocket. Residues 138 to 139 (GS), Asn-166, Tyr-273, and Glu-354 each bind thiamine diphosphate. Asn-166 provides a ligand contact to Mg(2+).

It belongs to the transketolase family. DXPS subfamily. Homodimer. It depends on Mg(2+) as a cofactor. The cofactor is thiamine diphosphate.

The catalysed reaction is D-glyceraldehyde 3-phosphate + pyruvate + H(+) = 1-deoxy-D-xylulose 5-phosphate + CO2. Its pathway is metabolic intermediate biosynthesis; 1-deoxy-D-xylulose 5-phosphate biosynthesis; 1-deoxy-D-xylulose 5-phosphate from D-glyceraldehyde 3-phosphate and pyruvate: step 1/1. Functionally, catalyzes the acyloin condensation reaction between C atoms 2 and 3 of pyruvate and glyceraldehyde 3-phosphate to yield 1-deoxy-D-xylulose-5-phosphate (DXP). The polypeptide is 1-deoxy-D-xylulose-5-phosphate synthase (Sulfurimonas denitrificans (strain ATCC 33889 / DSM 1251) (Thiomicrospira denitrificans (strain ATCC 33889 / DSM 1251))).